The chain runs to 308 residues: N-acetyl-gamma-glutamyl-phosphate reductase (308 aa).

Cys116 is a catalytic residue.

It belongs to the NAGSA dehydrogenase family. Type 2 subfamily.

It localises to the cytoplasm. It catalyses the reaction N-acetyl-L-glutamate 5-semialdehyde + phosphate + NADP(+) = N-acetyl-L-glutamyl 5-phosphate + NADPH + H(+). It participates in amino-acid biosynthesis; L-arginine biosynthesis; N(2)-acetyl-L-ornithine from L-glutamate: step 3/4. Functionally, catalyzes the NADPH-dependent reduction of N-acetyl-5-glutamyl phosphate to yield N-acetyl-L-glutamate 5-semialdehyde. The polypeptide is N-acetyl-gamma-glutamyl-phosphate reductase (Mesorhizobium japonicum (strain LMG 29417 / CECT 9101 / MAFF 303099) (Mesorhizobium loti (strain MAFF 303099))).